The primary structure comprises 518 residues: Adenine deaminase (518 aa).

This sequence belongs to the metallo-dependent hydrolases superfamily. Adenine deaminase family. Mn(2+) serves as cofactor.

It catalyses the reaction adenine + H2O + H(+) = hypoxanthine + NH4(+). The chain is Adenine deaminase from Methanoculleus marisnigri (strain ATCC 35101 / DSM 1498 / JR1).